The chain runs to 466 residues: ATP synthase subunit beta (466 aa).

Gly152–Thr159 is a binding site for ATP.

This sequence belongs to the ATPase alpha/beta chains family. F-type ATPases have 2 components, CF(1) - the catalytic core - and CF(0) - the membrane proton channel. CF(1) has five subunits: alpha(3), beta(3), gamma(1), delta(1), epsilon(1). CF(0) has three main subunits: a(1), b(2) and c(9-12). The alpha and beta chains form an alternating ring which encloses part of the gamma chain. CF(1) is attached to CF(0) by a central stalk formed by the gamma and epsilon chains, while a peripheral stalk is formed by the delta and b chains.

The protein localises to the cell inner membrane. The catalysed reaction is ATP + H2O + 4 H(+)(in) = ADP + phosphate + 5 H(+)(out). Functionally, produces ATP from ADP in the presence of a proton gradient across the membrane. The catalytic sites are hosted primarily by the beta subunits. The polypeptide is ATP synthase subunit beta (Helicobacter acinonychis (strain Sheeba)).